Reading from the N-terminus, the 128-residue chain is MAYRKLGRTSSQRKAMLRDLTTDLLINESIVTTEARAKEIRKTVEKMITLGKRGDLHARRQAAAFVRNEIASENYDEATDKYTSTTALQKLFSEIAPRYAERNGGYTRILKTESRRGDAAPMAIIELV.

The protein belongs to the bacterial ribosomal protein bL17 family. As to quaternary structure, part of the 50S ribosomal subunit. Contacts protein L32.

The polypeptide is Large ribosomal subunit protein bL17 (Streptococcus pneumoniae serotype 4 (strain ATCC BAA-334 / TIGR4)).